Consider the following 40-residue polypeptide: Photosystem II reaction center protein J (40 aa).

A helical membrane pass occupies residues 8–28; that stretch reads IPLWLIGTVVGTPVISLVGIF.

Belongs to the PsbJ family. In terms of assembly, PSII is composed of 1 copy each of membrane proteins PsbA, PsbB, PsbC, PsbD, PsbE, PsbF, PsbH, PsbI, PsbJ, PsbK, PsbL, PsbM, PsbT, PsbX, PsbY, PsbZ, Psb30/Ycf12, at least 3 peripheral proteins of the oxygen-evolving complex and a large number of cofactors. It forms dimeric complexes.

The protein localises to the plastid. The protein resides in the chloroplast thylakoid membrane. Its function is as follows. One of the components of the core complex of photosystem II (PSII). PSII is a light-driven water:plastoquinone oxidoreductase that uses light energy to abstract electrons from H(2)O, generating O(2) and a proton gradient subsequently used for ATP formation. It consists of a core antenna complex that captures photons, and an electron transfer chain that converts photonic excitation into a charge separation. The protein is Photosystem II reaction center protein J of Huperzia lucidula (Shining clubmoss).